We begin with the raw amino-acid sequence, 97 residues long: Cysteine-rich and transmembrane domain-containing protein 1 (97 aa).

Positions 1–40 are enriched in pro residues; that stretch reads MNQENPPPYPGPGPTAPYPPYPPQPMGPGPMGGPYPPPQG. The disordered stretch occupies residues 1–61; it reads MNQENPPPYP…QGGPQEPPKT (61 aa). The segment covering 41 to 50 has biased composition (low complexity); that stretch reads YPYQGYPQYG. Residues 74-91 form a helical membrane-spanning segment; it reads LGPSTCLTACWTALCCCC.

This sequence belongs to the CYSTM1 family.

It localises to the membrane. This Homo sapiens (Human) protein is Cysteine-rich and transmembrane domain-containing protein 1 (CYSTM1).